The sequence spans 341 residues: Probable sulfurtransferase (341 aa).

Residues Cys-40, Cys-42, Cys-58, and Cys-61 each contribute to the Zn(2+) site. Gly-88 lines the ATP pocket. Cys-176 and Cys-179 together coordinate [4Fe-4S] cluster. 2 residues coordinate ATP: Arg-183 and Gly-202. Cys-267 provides a ligand contact to [4Fe-4S] cluster. Zn(2+) is bound by residues Cys-316, Cys-319, Cys-328, and Cys-331.

The protein belongs to the TtcA family. It depends on [4Fe-4S] cluster as a cofactor. Mg(2+) serves as cofactor.

This Methanocaldococcus jannaschii (strain ATCC 43067 / DSM 2661 / JAL-1 / JCM 10045 / NBRC 100440) (Methanococcus jannaschii) protein is Probable sulfurtransferase.